The primary structure comprises 200 residues: dITP/XTP pyrophosphatase (200 aa).

7-12 (TSNKHK) provides a ligand contact to substrate. Positions 38 and 73 each coordinate Mg(2+). Catalysis depends on aspartate 73, which acts as the Proton acceptor. Substrate is bound by residues serine 74, 154–157 (FGYD), lysine 177, and 182–183 (HR).

Belongs to the HAM1 NTPase family. As to quaternary structure, homodimer. It depends on Mg(2+) as a cofactor.

The enzyme catalyses XTP + H2O = XMP + diphosphate + H(+). The catalysed reaction is dITP + H2O = dIMP + diphosphate + H(+). It catalyses the reaction ITP + H2O = IMP + diphosphate + H(+). Functionally, pyrophosphatase that catalyzes the hydrolysis of nucleoside triphosphates to their monophosphate derivatives, with a high preference for the non-canonical purine nucleotides XTP (xanthosine triphosphate), dITP (deoxyinosine triphosphate) and ITP. Seems to function as a house-cleaning enzyme that removes non-canonical purine nucleotides from the nucleotide pool, thus preventing their incorporation into DNA/RNA and avoiding chromosomal lesions. This Campylobacter jejuni subsp. doylei (strain ATCC BAA-1458 / RM4099 / 269.97) protein is dITP/XTP pyrophosphatase.